Here is a 415-residue protein sequence, read N- to C-terminus: MKGSYKSRWVIVIVVVIAAIAAFWFWQGRNESQSAAPGATKQAQQSPAGGRRGMRSGPLAPVQAATAVEQAVPRYLTGLGTITAANTVTVRSRVDGQLMALHFQEGQQVKAGDLLAEIDPSQFKVALAQAQGQLAKDKATLANARRDLARYQQLAKTNLVSRQELDAQQALVSETEGTFKADEASVASAQLQLDWSRITAPVDGRVGLKQVDVGNQISSGDTTGIVVITQTHPIDLLFTLPESDITTVVQAQKAGKPLVVEAWDRTNSKKLSEGTLLSLDNQIDATTGTIKVKARFNNQDDALFPNQFVNARMLVDTEQNAVVIPTAALQMGNEGHFVWVLNSENKVSKHLVTPGIQDSQKVVIRAGISAGDRVVTDGIDRLTEGAKVEVVEAQSATTPEEKATSREYAKKGARS.

Positions 1–21 are cleaved as a signal peptide; it reads MKGSYKSRWVIVIVVVIAAIA. A compositionally biased stretch (polar residues) spans 34–47; sequence SAAPGATKQAQQSP. 2 disordered regions span residues 34-60 and 392-415; these read SAAP…GPLA and EAQS…GARS. A compositionally biased stretch (basic and acidic residues) spans 399–415; sequence PEEKATSREYAKKGARS.

It belongs to the membrane fusion protein (MFP) (TC 8.A.1) family. In terms of assembly, part of a tripartite efflux system composed of MdtA, MdtB and MdtC.

The protein localises to the cell inner membrane. The MdtABC tripartite complex confers resistance against novobiocin and deoxycholate. This chain is Multidrug resistance protein MdtA, found in Escherichia fergusonii (strain ATCC 35469 / DSM 13698 / CCUG 18766 / IAM 14443 / JCM 21226 / LMG 7866 / NBRC 102419 / NCTC 12128 / CDC 0568-73).